The primary structure comprises 720 residues: Serrate RNA effector molecule (720 aa).

Disordered stretches follow at residues 1-192, 288-335, and 361-380; these read MADV…NPQR, LNKS…FTSD, and ENVLQGSETEKSGREKLHSG. Positions 33-47 are enriched in low complexity; that stretch reads SLPQQEQEQDQQQLP. Basic and acidic residues predominate over residues 48 to 76; the sequence is LRRERDSRERRDERDIERPPPNRRERDRS. Phosphoserine occurs at positions 76, 90, and 92. Over residues 99–115 the composition is skewed to basic residues; sequence DRRHSPPQRRSPPQKRY. Basic and acidic residues-rich tracts occupy residues 116–126 and 136–164; these read RRDDNGYDGRR and PDRRFGYDHGGGYDREMGGRPGYGDERPH. Positions 288 to 297 are enriched in polar residues; sequence LNKSGRTSEP. Basic and acidic residues predominate over residues 368–378; that stretch reads ETEKSGREKLH. The segment at 498–523 adopts a C2H2-type zinc-finger fold; the sequence is YGCGAKGCTKLFHAAEFVYKHLKLKH. Disordered stretches follow at residues 543–622 and 666–687; these read YMND…AFGG and RDPSGPNPPFEGSGRGGPAPFL. The span at 570–607 shows a compositional bias: basic and acidic residues; it reads PSMENRLRDDRGGRRERDGRANGNDRNDRSEDQQRGDN. A compositionally biased stretch (gly residues) spans 608-622; the sequence is DGGNPGEVGYDAFGG. Position 689 is a phosphoserine (S689).

This sequence belongs to the ARS2 family. As to quaternary structure, interacts with HYL1. Interacts with RCF3, RS40 and RS41. Expressed in shoot meristems and in emerging organ primordia throughout development.

The protein resides in the nucleus. Its subcellular location is the nucleus speckle. In terms of biological role, acts as a mediator between the cap-binding complex (CBC) and both the pre-mRNA splicing and primary microRNAs (miRNAs) processing machinery. Required for proper processing of primary miRNAs to miRNAs, thereby playing a role in RNA-mediated gene silencing (RNAi) by miRNAs. Does not participate in sense post-transcriptional gene silencing. Acts as a regulator of meristem activity and adaxial leaf fate via the miRNA gene-silencing pathway by regulating the expression of PHB and by limiting the competence of shoot tissue to respond to KNOX expression. Its function is however not limited to miRNA-mediated repression of leaf polarity genes, but rather acts as a general regulator of primary microRNAs processing. Also critical for the accumulation of the trans-acting small interfering RNA (ta-siRNA). Required for pre-mRNA splicing. This Arabidopsis thaliana (Mouse-ear cress) protein is Serrate RNA effector molecule (SE).